Reading from the N-terminus, the 112-residue chain is Nucleoid-associated protein FTW_0607 (112 aa).

Positions Met1 to Glu27 are disordered. The span at Glu17–Glu27 shows a compositional bias: basic and acidic residues.

Belongs to the YbaB/EbfC family. As to quaternary structure, homodimer.

The protein localises to the cytoplasm. It is found in the nucleoid. Binds to DNA and alters its conformation. May be involved in regulation of gene expression, nucleoid organization and DNA protection. In Francisella tularensis subsp. tularensis (strain WY96-3418), this protein is Nucleoid-associated protein FTW_0607.